The following is a 301-amino-acid chain: Bifunctional protein FolD (301 aa).

NADP(+) contacts are provided by residues 166-168 (GKS), serine 191, and isoleucine 232.

It belongs to the tetrahydrofolate dehydrogenase/cyclohydrolase family. As to quaternary structure, homodimer.

The catalysed reaction is (6R)-5,10-methylene-5,6,7,8-tetrahydrofolate + NADP(+) = (6R)-5,10-methenyltetrahydrofolate + NADPH. The enzyme catalyses (6R)-5,10-methenyltetrahydrofolate + H2O = (6R)-10-formyltetrahydrofolate + H(+). The protein operates within one-carbon metabolism; tetrahydrofolate interconversion. Functionally, catalyzes the oxidation of 5,10-methylenetetrahydrofolate to 5,10-methenyltetrahydrofolate and then the hydrolysis of 5,10-methenyltetrahydrofolate to 10-formyltetrahydrofolate. The sequence is that of Bifunctional protein FolD from Orientia tsutsugamushi (strain Ikeda) (Rickettsia tsutsugamushi).